Consider the following 329-residue polypeptide: MAEVFVGPVAQGYASGEVTVLLASPRSFCAGVERAIETVKRVLDVAEGPVYVRKQIVHNTVVVAELRDRGAVFVEDLDEIPDPPPPGAVVVFSAHGVSPAVRAGADERGLQVVDATCPLVAKVHAEAARFAARGDTVVFIGHAGHEETEGTLGVAPRSTLLVQTPADVAALNLPEGTQLSYLTQTTLALDETADVIDALRARFPTLGQPPSEDICYATTNRQRALQSMVGECDVVLVIGSCNSSNSRRLVELAQRSGTPAYLIDGPDDIEPEWLSSVSTIGVTAGASAPPRLVGQVIDALRGYASITVVERSIATETVRFGLPKQVRAQ.

Cys29 lines the [4Fe-4S] cluster pocket. 2 residues coordinate (2E)-4-hydroxy-3-methylbut-2-enyl diphosphate: His58 and His95. 2 residues coordinate dimethylallyl diphosphate: His58 and His95. 2 residues coordinate isopentenyl diphosphate: His58 and His95. Cys117 serves as a coordination point for [4Fe-4S] cluster. Position 145 (His145) interacts with (2E)-4-hydroxy-3-methylbut-2-enyl diphosphate. Position 145 (His145) interacts with dimethylallyl diphosphate. Residue His145 participates in isopentenyl diphosphate binding. The active-site Proton donor is the Glu147. Thr185 contributes to the (2E)-4-hydroxy-3-methylbut-2-enyl diphosphate binding site. Cys215 lines the [4Fe-4S] cluster pocket. The (2E)-4-hydroxy-3-methylbut-2-enyl diphosphate site is built by Ser243, Ser244, Asn245, and Ser287. Residues Ser243, Ser244, Asn245, and Ser287 each contribute to the dimethylallyl diphosphate site. 4 residues coordinate isopentenyl diphosphate: Ser243, Ser244, Asn245, and Ser287.

Belongs to the IspH family. The cofactor is [4Fe-4S] cluster.

The enzyme catalyses isopentenyl diphosphate + 2 oxidized [2Fe-2S]-[ferredoxin] + H2O = (2E)-4-hydroxy-3-methylbut-2-enyl diphosphate + 2 reduced [2Fe-2S]-[ferredoxin] + 2 H(+). It catalyses the reaction dimethylallyl diphosphate + 2 oxidized [2Fe-2S]-[ferredoxin] + H2O = (2E)-4-hydroxy-3-methylbut-2-enyl diphosphate + 2 reduced [2Fe-2S]-[ferredoxin] + 2 H(+). It participates in isoprenoid biosynthesis; dimethylallyl diphosphate biosynthesis; dimethylallyl diphosphate from (2E)-4-hydroxy-3-methylbutenyl diphosphate: step 1/1. It functions in the pathway isoprenoid biosynthesis; isopentenyl diphosphate biosynthesis via DXP pathway; isopentenyl diphosphate from 1-deoxy-D-xylulose 5-phosphate: step 6/6. Its function is as follows. Catalyzes the conversion of 1-hydroxy-2-methyl-2-(E)-butenyl 4-diphosphate (HMBPP) into a mixture of isopentenyl diphosphate (IPP) and dimethylallyl diphosphate (DMAPP). Acts in the terminal step of the DOXP/MEP pathway for isoprenoid precursor biosynthesis. The chain is 4-hydroxy-3-methylbut-2-enyl diphosphate reductase 1 from Mycobacterium tuberculosis (strain CDC 1551 / Oshkosh).